Reading from the N-terminus, the 583-residue chain is cAMP-dependent protein kinase catalytic subunit 3 (583 aa).

Disordered stretches follow at residues A51–K75 and S98–K264. Polar residues-rich tracts occupy residues T52 to P69 and S98 to L107. The segment covering T108 to S162 has biased composition (low complexity). Acidic residues predominate over residues D163–Q176. The span at P181–S200 shows a compositional bias: low complexity. Over residues N205–G219 the composition is skewed to acidic residues. Basic and acidic residues predominate over residues G221–S234. The span at E235 to E256 shows a compositional bias: acidic residues. In terms of domain architecture, Protein kinase spans Y274–F528. Residues V280 to V288 and K303 contribute to the ATP site. The active-site Proton acceptor is D397. The 55-residue stretch at K529–F583 folds into the AGC-kinase C-terminal domain.

The protein belongs to the protein kinase superfamily. AGC Ser/Thr protein kinase family. cAMP subfamily. In terms of tissue distribution, expressed in embryonic mesoderm, and the optic lamina, wing disk and leg disks of third instar larvae. More abundant in adult head than adult body.

It catalyses the reaction L-seryl-[protein] + ATP = O-phospho-L-seryl-[protein] + ADP + H(+). It carries out the reaction L-threonyl-[protein] + ATP = O-phospho-L-threonyl-[protein] + ADP + H(+). Its function is as follows. Does not have an essential role in development. In Drosophila melanogaster (Fruit fly), this protein is cAMP-dependent protein kinase catalytic subunit 3 (Pka-C3).